The sequence spans 276 residues: Shikimate dehydrogenase (NADP(+)) (276 aa).

Residues 18-20 (SRS) and T65 each bind shikimate. Catalysis depends on K69, which acts as the Proton acceptor. The shikimate site is built by N90 and D106. NADP(+) contacts are provided by residues 132–136 (GAGGA) and I221. A shikimate-binding site is contributed by Y223. G244 serves as a coordination point for NADP(+).

Belongs to the shikimate dehydrogenase family. As to quaternary structure, homodimer.

It catalyses the reaction shikimate + NADP(+) = 3-dehydroshikimate + NADPH + H(+). It participates in metabolic intermediate biosynthesis; chorismate biosynthesis; chorismate from D-erythrose 4-phosphate and phosphoenolpyruvate: step 4/7. In terms of biological role, involved in the biosynthesis of the chorismate, which leads to the biosynthesis of aromatic amino acids. Catalyzes the reversible NADPH linked reduction of 3-dehydroshikimate (DHSA) to yield shikimate (SA). This chain is Shikimate dehydrogenase (NADP(+)), found in Paramagnetospirillum magneticum (strain ATCC 700264 / AMB-1) (Magnetospirillum magneticum).